Consider the following 380-residue polypeptide: 12-oxophytodienoate reductase 1 (380 aa).

FMN-binding positions include 35–37, A68, and Q110; that span reads PLT. Position 182-185 (182-185) interacts with substrate; it reads HGAH. Residue Y187 is the Proton donor of the active site. Residue R234 participates in FMN binding. Position 275 (R275) interacts with substrate. Residues G305 and 326-327 contribute to the FMN site; that span reads GR.

Belongs to the NADH:flavin oxidoreductase/NADH oxidase family. FMN serves as cofactor.

It carries out the reaction (1S,2S)-OPC-8 + NADP(+) = (9S,13S,15Z)-12-oxophyto-10,15-dienoate + NADPH + H(+). It functions in the pathway lipid metabolism; oxylipin biosynthesis. Probably involved in the biosynthesis or metabolism of oxylipin signaling molecules. In vitro, reduces cis(-)-12-oxophytodienoic acid (cis(-)-OPDA) and to cis(-)-OPC-8:0. The sequence is that of 12-oxophytodienoate reductase 1 from Oryza sativa subsp. japonica (Rice).